A 76-amino-acid chain; its full sequence is Conotoxin ArMKLT2-032 (76 aa).

An N-terminal signal peptide occupies residues 1–22 (MKLTCVLIIAVLFLTACQLTTG). Positions 23-46 (ETYSRGEQKDHALRSTDKNSKLTR) are excised as a propeptide. Gln-47 is subject to Pyrrolidone carboxylic acid. Intrachain disulfides connect Cys-48-Cys-62, Cys-55-Cys-66, and Cys-61-Cys-73.

Belongs to the conotoxin O1 superfamily. In terms of tissue distribution, expressed by the venom duct.

Its subcellular location is the secreted. In Conus arenatus (Sand-dusted cone), this protein is Conotoxin ArMKLT2-032.